We begin with the raw amino-acid sequence, 846 residues long: SLIT and NTRK-like protein 2 (846 aa).

A signal peptide spans methionine 1–serine 21. At arginine 22–leucine 622 the chain is on the extracellular side. Disulfide bonds link cysteine 29-cysteine 35 and cysteine 33-cysteine 46. LRR repeat units follow at residues arginine 63–asparagine 84, asparagine 87–glycine 108, threonine 111–glycine 132, serine 135–lysine 156, lysine 159–phenylalanine 180, and leucine 182–glutamate 203. A glycan (N-linked (GlcNAc...) asparagine) is linked at asparagine 84. Residues aspartate 167–glutamate 215 are required for interaction with PTPRD. The region spanning asparagine 216–arginine 265 is the LRRCT 1 domain. Asparagine 219 carries N-linked (GlcNAc...) asparagine glycosylation. Disulfide bonds link cysteine 220–cysteine 243 and cysteine 222–cysteine 263. Residues aspartate 261–arginine 322 form a disordered region. 2 stretches are compositionally biased toward low complexity: residues serine 267 to serine 276 and arginine 285 to proline 300. The LRRNT domain maps to glutamine 332 to lysine 374. 6 LRR repeats span residues serine 377 to glutamate 398, serine 401 to asparagine 422, serine 425 to glycine 446, serine 449 to alanine 470, asparagine 473 to glycine 494, and alanine 496 to aspartate 517. N-linked (GlcNAc...) asparagine glycosylation occurs at asparagine 422. Residues asparagine 530–glutamate 581 enclose the LRRCT 2 domain. Residues isoleucine 623–phenylalanine 643 form a helical membrane-spanning segment. Residues valine 644–leucine 846 are Cytoplasmic-facing. At tyrosine 757 the chain carries Phosphotyrosine.

The protein belongs to the SLITRK family. In terms of assembly, interacts with PTPRD; this interaction is PTPRD splicing-dependent and may induce pre-synaptic differentiation. Interacts with NTRK2. As to expression, in the adult, significant expression is detected only in the brain. Broadly expressed in embryonic brain with highest expression in ventricular layer, subventricular zone, cortical plate, pyramidal layer of hippocampus, subicular neuroepithelium, thalamus, hypothalamus and spinal cord.

The protein resides in the membrane. It is found in the cell membrane. It localises to the cell projection. The protein localises to the dendrite. Its function is as follows. It is involved in synaptogenesis. Promotes excitatory synapse differentiation. Suppresses neurite outgrowth. Involved in the negative regulation of NTRK2. The sequence is that of SLIT and NTRK-like protein 2 (Slitrk2) from Mus musculus (Mouse).